Reading from the N-terminus, the 837-residue chain is Tuftelin-interacting protein 11 (837 aa).

Composition is skewed to basic and acidic residues over residues 1-13 (MSLS…GEGR) and 53-64 (VWAERDSDDERP). Disordered regions lie at residues 1 to 21 (MSLS…DDER), 53 to 72 (VWAE…KRAR), and 85 to 133 (LKKG…KGFA). Residues 1-50 (MSLSHLYRDGEGRIDDDDDERENFEITDWDLQNEFNPNRQRHWQTKEEAT) are required for interaction with DHX15. Residues Ser2, Ser59, and Ser98 each carry the phosphoserine modification. Residues 91–102 (EEAELEDSDDEE) are compositionally biased toward acidic residues. The segment covering 103 to 116 (KPVKQDDFPKDFGP) has biased composition (basic and acidic residues). Position 144 is a phosphoserine (Ser144). One can recognise a G-patch domain in the interval 149–195 (TKGIGQKLLQKMGYVPGRGLGKNAQGIINPIEAKQRKGKGAVGAYGS). Residues 179–236 (IEAKQRKGKGAVGAYGSERTTQSMQDFPVVDSEEEAEEEFQKELSQWRKDPSGSKKKP) are disordered. Position 210 is a phosphoserine (Ser210). Residues 217–231 (EFQKELSQWRKDPSG) show a composition bias toward basic and acidic residues. A Nuclear localization signal motif is present at residues 700–705 (VKDKFN). Residues 710 to 734 (IMNRAVSSNVGAYMQPGARENIAYL) form a required for nuclear speckle localization region.

The protein belongs to the TFP11/STIP family. As to quaternary structure, identified in the spliceosome C complex. Found in the Intron Large (IL) complex, a post-mRNA release spliceosomal complex containing the excised intron, U2, U5 and U6 snRNPs, and splicing factors. Interacts with TUFT1. Interacts with DHX15; indicative for a recruitment of DHX15 to the IL complex. Interacts with GCFC2.

It localises to the cytoplasm. Its subcellular location is the nucleus. Its function is as follows. Involved in pre-mRNA splicing, specifically in spliceosome disassembly during late-stage splicing events. Intron turnover seems to proceed through reactions in two lariat-intron associated complexes termed Intron Large (IL) and Intron Small (IS). In cooperation with DHX15 seems to mediate the transition of the U2, U5 and U6 snRNP-containing IL complex to the snRNP-free IS complex leading to efficient debranching and turnover of excised introns. May play a role in the differentiation of ameloblasts and odontoblasts or in the forming of the enamel extracellular matrix. The polypeptide is Tuftelin-interacting protein 11 (TFIP11) (Pongo abelii (Sumatran orangutan)).